Here is a 33-residue protein sequence, read N- to C-terminus: Cytochrome b6-f complex subunit 8 (33 aa).

A helical transmembrane segment spans residues 2-22; it reads IFQIGWAALAAIFTFSIAMVV.

Belongs to the PetN family. The 4 large subunits of the cytochrome b6-f complex are cytochrome b6, subunit IV (17 kDa polypeptide, PetD), cytochrome f and the Rieske protein, while the 4 small subunits are PetG, PetL, PetM and PetN. The complex functions as a dimer.

It is found in the cellular thylakoid membrane. Functionally, component of the cytochrome b6-f complex, which mediates electron transfer between photosystem II (PSII) and photosystem I (PSI), cyclic electron flow around PSI, and state transitions. The polypeptide is Cytochrome b6-f complex subunit 8 (Prochlorococcus marinus (strain MIT 9301)).